We begin with the raw amino-acid sequence, 127 residues long: Large ribosomal subunit protein bL17 (127 aa).

The protein belongs to the bacterial ribosomal protein bL17 family. In terms of assembly, part of the 50S ribosomal subunit. Contacts protein L32.

The sequence is that of Large ribosomal subunit protein bL17 from Fervidobacterium nodosum (strain ATCC 35602 / DSM 5306 / Rt17-B1).